Here is a 62-residue protein sequence, read N- to C-terminus: Large ribosomal subunit protein bL28 (62 aa).

A disordered region spans residues 1–23; sequence MARRCFVTGKSAKAGNARSHSMR.

Belongs to the bacterial ribosomal protein bL28 family.

The chain is Large ribosomal subunit protein bL28 from Brevibacillus brevis (strain 47 / JCM 6285 / NBRC 100599).